A 450-amino-acid chain; its full sequence is MNNKRHSTNEQLSLDEINNTIKFDHRSSNKQKFLSFLGPGLLVAVGYMDPGNWITSMQGGAQYGYTLLFVILISSLSAMLLQSMTVRLGIATGMDLAQMTRHYLSRPIAIIFWIIAELAIIATDIAEVIGSAIALNLLFNIPLIVGALITVLDVFLLLFIMKYGFRKIEAIVGTLIFTVLFIFIFEVYISSPQLNAVLNGFIPHSEIITNNGILYIALGIIGATIMPHNLYLHSSIVQSRTYSRHNNEEKSQAIKFATIDSNIQLSIAFVVNCLLLVLGASLFFNSNADDLGGFYDLYHALKTEPVLGATMGAIMSTLFAVALLASGQNSTITGTLAGQIVMEGFLRLHIPNWLRRLITRSLAVIPVIVCLSIFKGNAAKIEQLLVFSQVFLSIALPFCLIPLQLATSNKDLMGPFYNKTWVNIISWTLIIILSILNVYLIVQTFQELQG.

Helical transmembrane passes span 34–54 (LSFLGPGLLVAVGYMDPGNWI), 61–81 (AQYGYTLLFVILISSLSAMLL), 108–128 (IAIIFWIIAELAIIATDIAEV), 141–161 (IPLIVGALITVLDVFLLLFIM), 170–190 (AIVGTLIFTVLFIFIFEVYIS), 212–232 (GILYIALGIIGATIMPHNLYL), 263–283 (IQLSIAFVVNCLLLVLGASLF), 305–325 (PVLGATMGAIMSTLFAVALLA), 361–381 (SLAVIPVIVCLSIFKGNAAKI), 383–403 (QLLVFSQVFLSIALPFCLIPL), and 422–442 (VNIISWTLIIILSILNVYLIV).

The protein belongs to the NRAMP family.

Its subcellular location is the cell membrane. Functionally, h(+)-stimulated, divalent metal cation uptake system. The protein is Divalent metal cation transporter MntH of Staphylococcus aureus (strain bovine RF122 / ET3-1).